We begin with the raw amino-acid sequence, 374 residues long: Probable tuliposide A-converting enzyme b6, amyloplastic (374 aa).

The N-terminal 68 residues, 1–68 (MSVALFCGPP…TNSSLSPSPT (68 aa)), are a transit peptide targeting the amyloplast. Serine 226 acts as the Acyl-ester intermediate in catalysis. Residues aspartate 316 and histidine 348 each act as charge relay system in the active site.

It belongs to the AB hydrolase superfamily. Homodimer.

Its subcellular location is the plastid. It localises to the amyloplast. The enzyme catalyses 6-tuliposide A = tulipalin A + D-glucose. Its function is as follows. Lactone-forming carboxylesterases, specifically catalyzing intramolecular transesterification, but not hydrolysis. Involved in the biosynthesis of tulipalins, defensive chemicals that show antimicrobial activities against a broad range of strains of bacteria and fungi. Substrates are 6-tuliposide A &gt; 6-tuliposide B. The chain is Probable tuliposide A-converting enzyme b6, amyloplastic (TCEA-B6) from Tulipa gesneriana (Garden tulip).